A 283-amino-acid chain; its full sequence is Protein/nucleic acid deglycase HchA (283 aa).

Residues histidine 86, glutamate 91, and histidine 123 each coordinate Zn(2+). Residue cysteine 185 is the Nucleophile of the active site.

It belongs to the peptidase C56 family. HchA subfamily. Homodimer.

It is found in the cytoplasm. The catalysed reaction is N(omega)-(1-hydroxy-2-oxopropyl)-L-arginyl-[protein] + H2O = lactate + L-arginyl-[protein] + H(+). The enzyme catalyses N(6)-(1-hydroxy-2-oxopropyl)-L-lysyl-[protein] + H2O = lactate + L-lysyl-[protein] + H(+). It catalyses the reaction S-(1-hydroxy-2-oxopropyl)-L-cysteinyl-[protein] + H2O = lactate + L-cysteinyl-[protein] + H(+). It carries out the reaction N(omega)-(1-hydroxy-2-oxoethyl)-L-arginyl-[protein] + H2O = L-arginyl-[protein] + glycolate + H(+). The catalysed reaction is N(6)-(1-hydroxy-2-oxoethyl)-L-lysyl-[protein] + H2O = glycolate + L-lysyl-[protein] + H(+). The enzyme catalyses S-(1-hydroxy-2-oxoethyl)-L-cysteinyl-[protein] + H2O = glycolate + L-cysteinyl-[protein] + H(+). It catalyses the reaction N(2)-(1-hydroxy-2-oxopropyl)-dGTP + H2O = lactate + dGTP + H(+). It carries out the reaction N(2)-(1-hydroxy-2-oxopropyl)-GTP + H2O = lactate + GTP + H(+). The catalysed reaction is N(2)-(1-hydroxy-2-oxopropyl)-GDP + H2O = lactate + GDP + H(+). The enzyme catalyses N(2)-(1-hydroxy-2-oxopropyl)-GMP + H2O = lactate + GMP + H(+). It catalyses the reaction N(2)-(1-hydroxy-2-oxoethyl)-dGTP + H2O = dGTP + glycolate + H(+). It carries out the reaction N(2)-(1-hydroxy-2-oxoethyl)-GTP + H2O = glycolate + GTP + H(+). The catalysed reaction is N(2)-(1-hydroxy-2-oxoethyl)-GDP + H2O = glycolate + GDP + H(+). The enzyme catalyses N(2)-(1-hydroxy-2-oxoethyl)-GMP + H2O = glycolate + GMP + H(+). It catalyses the reaction an N(2)-(1-hydroxy-2-oxopropyl)-guanosine in RNA + H2O = a guanosine in RNA + lactate + H(+). It carries out the reaction an N(2)-(1-hydroxy-2-oxopropyl)-2'-deoxyguanosine in DNA + H2O = a 2'-deoxyguanosine in DNA + lactate + H(+). The catalysed reaction is an N(2)-(1-hydroxy-2-oxoethyl)-guanosine in RNA + H2O = a guanosine in RNA + glycolate + H(+). The enzyme catalyses an N(2)-(1-hydroxy-2-oxoethyl)-2'-deoxyguanosine in DNA + H2O = a 2'-deoxyguanosine in DNA + glycolate + H(+). Its function is as follows. Protein and nucleotide deglycase that catalyzes the deglycation of the Maillard adducts formed between amino groups of proteins or nucleotides and reactive carbonyl groups of glyoxals. Thus, functions as a protein deglycase that repairs methylglyoxal- and glyoxal-glycated proteins, and releases repaired proteins and lactate or glycolate, respectively. Deglycates cysteine, arginine and lysine residues in proteins, and thus reactivates these proteins by reversing glycation by glyoxals. Acts on early glycation intermediates (hemithioacetals and aminocarbinols), preventing the formation of Schiff bases and advanced glycation endproducts (AGE). Also functions as a nucleotide deglycase able to repair glycated guanine in the free nucleotide pool (GTP, GDP, GMP, dGTP) and in DNA and RNA. Is thus involved in a major nucleotide repair system named guanine glycation repair (GG repair), dedicated to reversing methylglyoxal and glyoxal damage via nucleotide sanitization and direct nucleic acid repair. Plays an important role in protecting cells from carbonyl stress. The protein is Protein/nucleic acid deglycase HchA of Shigella sonnei (strain Ss046).